The primary structure comprises 197 residues: Holliday junction branch migration complex subunit RuvA (197 aa).

The domain I stretch occupies residues 1–64 (MIDSIVGIIQ…LSELECYGFL (64 aa)). A domain II region spans residues 65–143 (TREERELFLK…KEFKVASTSG (79 aa)). Residues 144–152 (KEEKTYEKL) form a flexible linker region. A domain III region spans residues 152 to 197 (LEEISLALLSLGYDIDEVNQVLSSEDFSELSLEDGIKLALKKLSKI).

Belongs to the RuvA family. As to quaternary structure, homotetramer. Forms an RuvA(8)-RuvB(12)-Holliday junction (HJ) complex. HJ DNA is sandwiched between 2 RuvA tetramers; dsDNA enters through RuvA and exits via RuvB. An RuvB hexamer assembles on each DNA strand where it exits the tetramer. Each RuvB hexamer is contacted by two RuvA subunits (via domain III) on 2 adjacent RuvB subunits; this complex drives branch migration. In the full resolvosome a probable DNA-RuvA(4)-RuvB(12)-RuvC(2) complex forms which resolves the HJ.

It localises to the cytoplasm. Functionally, the RuvA-RuvB-RuvC complex processes Holliday junction (HJ) DNA during genetic recombination and DNA repair, while the RuvA-RuvB complex plays an important role in the rescue of blocked DNA replication forks via replication fork reversal (RFR). RuvA specifically binds to HJ cruciform DNA, conferring on it an open structure. The RuvB hexamer acts as an ATP-dependent pump, pulling dsDNA into and through the RuvAB complex. HJ branch migration allows RuvC to scan DNA until it finds its consensus sequence, where it cleaves and resolves the cruciform DNA. This chain is Holliday junction branch migration complex subunit RuvA, found in Caldicellulosiruptor bescii (strain ATCC BAA-1888 / DSM 6725 / KCTC 15123 / Z-1320) (Anaerocellum thermophilum).